Reading from the N-terminus, the 399-residue chain is Argininosuccinate synthase (399 aa).

8–16 is an ATP binding site; sequence AYSGGLDTS. L-citrulline is bound at residue Tyr-87. ATP is bound at residue Gly-117. The L-aspartate site is built by Thr-119, Asn-123, and Asp-124. Asn-123 contacts L-citrulline. Residues Arg-127, Ser-175, Glu-260, and Tyr-272 each contribute to the L-citrulline site.

Belongs to the argininosuccinate synthase family. Type 1 subfamily. As to quaternary structure, homotetramer.

It localises to the cytoplasm. It catalyses the reaction L-citrulline + L-aspartate + ATP = 2-(N(omega)-L-arginino)succinate + AMP + diphosphate + H(+). It participates in amino-acid biosynthesis; L-arginine biosynthesis; L-arginine from L-ornithine and carbamoyl phosphate: step 2/3. In Mycolicibacterium smegmatis (strain ATCC 700084 / mc(2)155) (Mycobacterium smegmatis), this protein is Argininosuccinate synthase.